We begin with the raw amino-acid sequence, 470 residues long: MNPNQKIICISATGMTLSVVSLLIGIANLGLNIGLHYKVGDTPDVNIPNVNRTNSTTTIINNNTQNNFTNITNIIQNKNEERTFLNLTKPLCEVNSWHILSKDNAIRIGEDAHILVTREPYLSCDPQGCRMFALSQGTTLRGRHANGTIHDRSPFRALVSWEMGQAPSPYNAKVECIGWSSTSCHDGISRMSICMSGPNNNASAVVWYGGRPVTEIPSWAGNILRTQESECVCHKGVCPVVMTDGPATNRAATKIIYFKEGKIQKIEELTGKAQHIEECSCYGAGGVIKCICRDNWKGANRPVITIDPEIMTHTSKYLCSKVLTDTSRPNDPTNGNCDAPITGGSPDPGVKGFAFLDGENSWLGRTISKDSRSGYEMLKVPNAETDTQSGPISHQMIVNNQNWSGYSGAFIDYWANKECFNPCFYVELIRGRPKESSVLWTSNSIVALCGSRERLGSWSWHDGAEIIYFK.

Residues 1 to 6 lie on the Intravirion side of the membrane; sequence MNPNQK. A helical transmembrane segment spans residues 7-27; sequence IICISATGMTLSVVSLLIGIA. The interval 11 to 33 is involved in apical transport and lipid raft association; sequence SATGMTLSVVSLLIGIANLGLNI. Topologically, residues 28 to 470 are virion surface; the sequence is NLGLNIGLHY…HDGAEIIYFK (443 aa). The segment at 36–88 is hypervariable stalk region; it reads HYKVGDTPDVNIPNVNRTNSTTTIINNNTQNNFTNITNIIQNKNEERTFLNLT. 6 N-linked (GlcNAc...) asparagine; by host glycosylation sites follow: Asn-51, Asn-54, Asn-62, Asn-67, Asn-70, and Asn-86. The segment at 91–470 is head of neuraminidase; sequence LCEVNSWHIL…HDGAEIIYFK (380 aa). 8 disulfides stabilise this stretch: Cys-92–Cys-419, Cys-124–Cys-129, Cys-184–Cys-231, Cys-233–Cys-238, Cys-279–Cys-292, Cys-281–Cys-290, Cys-319–Cys-337, and Cys-423–Cys-449. Arg-118 contributes to the substrate binding site. Residue Asn-146 is glycosylated (N-linked (GlcNAc...) asparagine; by host). Asp-151 functions as the Proton donor/acceptor in the catalytic mechanism. Arg-152 provides a ligand contact to substrate. Asn-201 is a glycosylation site (N-linked (GlcNAc...) asparagine; by host). 277–278 contacts substrate; the sequence is EE. Arg-293 lines the substrate pocket. Positions 294, 298, and 325 each coordinate Ca(2+). Arg-372 is a binding site for substrate. A glycan (N-linked (GlcNAc...) asparagine; by host) is linked at Asn-402. Residue Tyr-406 is the Nucleophile of the active site.

Belongs to the glycosyl hydrolase 34 family. In terms of assembly, homotetramer. Ca(2+) serves as cofactor. In terms of processing, N-glycosylated.

It localises to the virion membrane. It is found in the host apical cell membrane. It catalyses the reaction Hydrolysis of alpha-(2-&gt;3)-, alpha-(2-&gt;6)-, alpha-(2-&gt;8)- glycosidic linkages of terminal sialic acid residues in oligosaccharides, glycoproteins, glycolipids, colominic acid and synthetic substrates.. Inhibited by the neuraminidase inhibitors zanamivir (Relenza) and oseltamivir (Tamiflu). These drugs interfere with the release of progeny virus from infected cells and are effective against all influenza strains. Resistance to neuraminidase inhibitors is quite rare. In terms of biological role, catalyzes the removal of terminal sialic acid residues from viral and cellular glycoconjugates. Cleaves off the terminal sialic acids on the glycosylated HA during virus budding to facilitate virus release. Additionally helps virus spread through the circulation by further removing sialic acids from the cell surface. These cleavages prevent self-aggregation and ensure the efficient spread of the progeny virus from cell to cell. Otherwise, infection would be limited to one round of replication. Described as a receptor-destroying enzyme because it cleaves a terminal sialic acid from the cellular receptors. May facilitate viral invasion of the upper airways by cleaving the sialic acid moieties on the mucin of the airway epithelial cells. Likely to plays a role in the budding process through its association with lipid rafts during intracellular transport. May additionally display a raft-association independent effect on budding. Plays a role in the determination of host range restriction on replication and virulence. Sialidase activity in late endosome/lysosome traffic seems to enhance virus replication. The chain is Neuraminidase from Aves (Pig).